Here is a 116-residue protein sequence, read N- to C-terminus: Large ribosomal subunit protein bL17 (116 aa).

This sequence belongs to the bacterial ribosomal protein bL17 family. In terms of assembly, part of the 50S ribosomal subunit. Contacts protein L32.

The sequence is that of Large ribosomal subunit protein bL17 from Prochlorococcus marinus (strain SARG / CCMP1375 / SS120).